Reading from the N-terminus, the 233-residue chain is 2,3,4,5-tetrahydropyridine-2,6-dicarboxylate N-acetyltransferase (233 aa).

It belongs to the transferase hexapeptide repeat family. DapH subfamily.

The catalysed reaction is (S)-2,3,4,5-tetrahydrodipicolinate + acetyl-CoA + H2O = L-2-acetamido-6-oxoheptanedioate + CoA. The protein operates within amino-acid biosynthesis; L-lysine biosynthesis via DAP pathway; LL-2,6-diaminopimelate from (S)-tetrahydrodipicolinate (acetylase route): step 1/3. Functionally, catalyzes the transfer of an acetyl group from acetyl-CoA to tetrahydrodipicolinate. The sequence is that of 2,3,4,5-tetrahydropyridine-2,6-dicarboxylate N-acetyltransferase from Leuconostoc mesenteroides subsp. mesenteroides (strain ATCC 8293 / DSM 20343 / BCRC 11652 / CCM 1803 / JCM 6124 / NCDO 523 / NBRC 100496 / NCIMB 8023 / NCTC 12954 / NRRL B-1118 / 37Y).